A 179-amino-acid chain; its full sequence is Adenine phosphoribosyltransferase (179 aa).

This sequence belongs to the purine/pyrimidine phosphoribosyltransferase family. Homodimer.

The protein resides in the cytoplasm. It carries out the reaction AMP + diphosphate = 5-phospho-alpha-D-ribose 1-diphosphate + adenine. It functions in the pathway purine metabolism; AMP biosynthesis via salvage pathway; AMP from adenine: step 1/1. Catalyzes a salvage reaction resulting in the formation of AMP, that is energically less costly than de novo synthesis. The protein is Adenine phosphoribosyltransferase of Bradyrhizobium diazoefficiens (strain JCM 10833 / BCRC 13528 / IAM 13628 / NBRC 14792 / USDA 110).